The following is a 266-amino-acid chain: Movement protein (266 aa).

The segment at Ser-211–Val-244 is disordered. Over residues Pro-230–Val-244 the composition is skewed to basic and acidic residues.

Belongs to the tobamovirus movement protein family. In terms of assembly, binds to host RBCS at the plasmodesmata; this interaction seems required for viral systemic movement.

The protein resides in the host cytoplasm. It is found in the host cytoskeleton. It localises to the host cell junction. The protein localises to the host plasmodesma. Its function is as follows. Transports viral genome to neighboring plant cells directly through plasmosdesmata, without any budding. The movement protein allows efficient cell to cell propagation, by bypassing the host cell wall barrier. Forms a ribonucleoprotein complex with viral RNA. Binds microtubules and modulates microtubule stability. Can bind double-stranded DNA. Evades host resistance (R) protein (e.g. tomato ToMV resistance protein TM-2(2), AC Q71BG9) in ToMV/TMV resistant plants. This chain is Movement protein (MP), found in Tomato brown rugose fruit virus (isolate TOBRFV/Tomato/Jordan/Tom1-Jo/2015) (ToBRFV).